The following is a 470-amino-acid chain: Sulfate adenylyltransferase subunit 1 (470 aa).

The tr-type G domain maps to 22–238; the sequence is KELLRFITCG…ETIKIDYAYT (217 aa). The interval 31 to 38 is G1; it reads GSVDDGKS. Residue 31-38 coordinates GTP; it reads GSVDDGKS. The G2 stretch occupies residues 89–93; it reads GITID. The G3 stretch occupies residues 110–113; that stretch reads DTPG. GTP-binding positions include 110-114 and 165-168; these read DTPGH and NKMD. The G4 stretch occupies residues 165–168; that stretch reads NKMD. A G5 region spans residues 202–204; sequence SAL.

This sequence belongs to the TRAFAC class translation factor GTPase superfamily. Classic translation factor GTPase family. CysN/NodQ subfamily. Heterodimer composed of CysD, the smaller subunit, and CysN.

It catalyses the reaction sulfate + ATP + H(+) = adenosine 5'-phosphosulfate + diphosphate. The protein operates within sulfur metabolism; hydrogen sulfide biosynthesis; sulfite from sulfate: step 1/3. In terms of biological role, with CysD forms the ATP sulfurylase (ATPS) that catalyzes the adenylation of sulfate producing adenosine 5'-phosphosulfate (APS) and diphosphate, the first enzymatic step in sulfur assimilation pathway. APS synthesis involves the formation of a high-energy phosphoric-sulfuric acid anhydride bond driven by GTP hydrolysis by CysN coupled to ATP hydrolysis by CysD. The polypeptide is Sulfate adenylyltransferase subunit 1 (Francisella tularensis subsp. tularensis (strain SCHU S4 / Schu 4)).